A 600-amino-acid polypeptide reads, in one-letter code: Aspartate--tRNA(Asp/Asn) ligase (600 aa).

Residue Glu-175 participates in L-aspartate binding. Residues Gln-199–Lys-202 form an aspartate region. Arg-221 contributes to the L-aspartate binding site. ATP-binding positions include Arg-221–Glu-223 and Gln-230. His-453 contributes to the L-aspartate binding site. Residue Glu-487 coordinates ATP. Residue Arg-494 participates in L-aspartate binding. Gly-539–Arg-542 contributes to the ATP binding site. The interval Ala-578–Lys-600 is disordered. The span at Gln-580–Pro-590 shows a compositional bias: basic and acidic residues.

The protein belongs to the class-II aminoacyl-tRNA synthetase family. Type 1 subfamily. Homodimer.

Its subcellular location is the cytoplasm. The catalysed reaction is tRNA(Asx) + L-aspartate + ATP = L-aspartyl-tRNA(Asx) + AMP + diphosphate. Its function is as follows. Aspartyl-tRNA synthetase with relaxed tRNA specificity since it is able to aspartylate not only its cognate tRNA(Asp) but also tRNA(Asn). Reaction proceeds in two steps: L-aspartate is first activated by ATP to form Asp-AMP and then transferred to the acceptor end of tRNA(Asp/Asn). In Corynebacterium jeikeium (strain K411), this protein is Aspartate--tRNA(Asp/Asn) ligase.